Reading from the N-terminus, the 81-residue chain is Short neurotoxin 1 (81 aa).

The first 21 residues, M1 to T21, serve as a signal peptide directing secretion. 4 cysteine pairs are disulfide-bonded: C24/C43, C38/C60, C62/C73, and C74/C79.

Belongs to the three-finger toxin family. Short-chain subfamily. Type I alpha-neurotoxin sub-subfamily. Expressed by the venom gland.

The protein localises to the secreted. Functionally, binds to muscle nicotinic acetylcholine receptor (nAChR) and inhibit acetylcholine from binding to the receptor, thereby impairing neuromuscular transmission. This chain is Short neurotoxin 1, found in Austrelaps superbus (Lowland copperhead snake).